Here is a 153-residue protein sequence, read N- to C-terminus: Vasotocin-neurophysin VT 1 (153 aa).

Positions 1 to 19 are cleaved as a signal peptide; that stretch reads MPQCALLLSLLGLLALSSA. A disulfide bridge links cysteine 20 with cysteine 25. At glycine 28 the chain carries Glycine amide. Cystine bridges form between cysteine 41–cysteine 85, cysteine 44–cysteine 58, cysteine 52–cysteine 75, cysteine 59–cysteine 65, cysteine 92–cysteine 105, cysteine 99–cysteine 117, and cysteine 106–cysteine 111.

It belongs to the vasopressin/oxytocin family. Seven disulfide bonds are present in neurophysin.

It localises to the secreted. Its function is as follows. Vasotocin is probably an antidiuretic hormone. This Takifugu rubripes (Japanese pufferfish) protein is Vasotocin-neurophysin VT 1.